Here is a 207-residue protein sequence, read N- to C-terminus: LexA repressor (207 aa).

The H-T-H motif DNA-binding region spans R28–K48. Residues S126 and K163 each act as for autocatalytic cleavage activity in the active site.

The protein belongs to the peptidase S24 family. Homodimer.

It carries out the reaction Hydrolysis of Ala-|-Gly bond in repressor LexA.. Its function is as follows. Represses a number of genes involved in the response to DNA damage (SOS response), including recA and lexA. In the presence of single-stranded DNA, RecA interacts with LexA causing an autocatalytic cleavage which disrupts the DNA-binding part of LexA, leading to derepression of the SOS regulon and eventually DNA repair. The polypeptide is LexA repressor (Marinomonas sp. (strain MWYL1)).